A 728-amino-acid polypeptide reads, in one-letter code: Catalase-peroxidase 1 (728 aa).

The segment at residues 91–218 (WHGAGTYRIA…LAAVQMGLIY (128 aa)) is a cross-link (tryptophyl-tyrosyl-methioninium (Trp-Tyr) (with M-244)). H92 functions as the Proton acceptor in the catalytic mechanism. The segment at residues 218–244 (YVNPEGPDGKPDPVAAARDIRDTFARM) is a cross-link (tryptophyl-tyrosyl-methioninium (Tyr-Met) (with W-91)). Residue H259 participates in heme b binding.

It belongs to the peroxidase family. Peroxidase/catalase subfamily. Homodimer or homotetramer. Heme b serves as cofactor. In terms of processing, formation of the three residue Trp-Tyr-Met cross-link is important for the catalase, but not the peroxidase activity of the enzyme.

The enzyme catalyses H2O2 + AH2 = A + 2 H2O. The catalysed reaction is 2 H2O2 = O2 + 2 H2O. Bifunctional enzyme with both catalase and broad-spectrum peroxidase activity. This is Catalase-peroxidase 1 from Burkholderia vietnamiensis (strain G4 / LMG 22486) (Burkholderia cepacia (strain R1808)).